The primary structure comprises 235 residues: Glucosamine-6-phosphate deaminase (235 aa).

Aspartate 62 serves as the catalytic Proton acceptor; for enolization step. The For ring-opening step role is filled by asparagine 128. The Proton acceptor; for ring-opening step role is filled by histidine 130. Glutamate 135 functions as the For ring-opening step in the catalytic mechanism.

This sequence belongs to the glucosamine/galactosamine-6-phosphate isomerase family. NagB subfamily.

It carries out the reaction alpha-D-glucosamine 6-phosphate + H2O = beta-D-fructose 6-phosphate + NH4(+). It participates in amino-sugar metabolism; N-acetylneuraminate degradation; D-fructose 6-phosphate from N-acetylneuraminate: step 5/5. In terms of biological role, catalyzes the reversible isomerization-deamination of glucosamine 6-phosphate (GlcN6P) to form fructose 6-phosphate (Fru6P) and ammonium ion. The chain is Glucosamine-6-phosphate deaminase from Lactococcus lactis subsp. lactis (strain IL1403) (Streptococcus lactis).